A 340-amino-acid chain; its full sequence is uncharacterized protein (340 aa).

A signal peptide spans 1-20 (MGGARRLKLDGSIPNQLARA).

This is an uncharacterized protein from Mycobacterium tuberculosis (strain CDC 1551 / Oshkosh).